Consider the following 946-residue polypeptide: Bifunctional glutamine synthetase adenylyltransferase/adenylyl-removing enzyme (946 aa).

The interval 1–440 (MKPLSSPLQQ…VFNELIGDDE (440 aa)) is adenylyl removase. The interval 449 to 946 (SEQWRELWQD…VSWQKWLVEE (498 aa)) is adenylyl transferase.

This sequence belongs to the GlnE family. Requires Mg(2+) as cofactor.

The enzyme catalyses [glutamine synthetase]-O(4)-(5'-adenylyl)-L-tyrosine + phosphate = [glutamine synthetase]-L-tyrosine + ADP. The catalysed reaction is [glutamine synthetase]-L-tyrosine + ATP = [glutamine synthetase]-O(4)-(5'-adenylyl)-L-tyrosine + diphosphate. In terms of biological role, involved in the regulation of glutamine synthetase GlnA, a key enzyme in the process to assimilate ammonia. When cellular nitrogen levels are high, the C-terminal adenylyl transferase (AT) inactivates GlnA by covalent transfer of an adenylyl group from ATP to specific tyrosine residue of GlnA, thus reducing its activity. Conversely, when nitrogen levels are low, the N-terminal adenylyl removase (AR) activates GlnA by removing the adenylyl group by phosphorolysis, increasing its activity. The regulatory region of GlnE binds the signal transduction protein PII (GlnB) which indicates the nitrogen status of the cell. The polypeptide is Bifunctional glutamine synthetase adenylyltransferase/adenylyl-removing enzyme (Escherichia coli (strain SMS-3-5 / SECEC)).